Consider the following 127-residue polypeptide: Modulator protein MzrA (127 aa).

Residues 1-10 (MQIPRMSLRQ) lie on the Cytoplasmic side of the membrane. The helical transmembrane segment at 11–31 (LAWSGAVLLLVGTLLLAWSAV) threads the bilayer. Topologically, residues 32-127 (RQQESTLAIR…RLRDNSHRFG (96 aa)) are periplasmic.

This sequence belongs to the MzrA family. As to quaternary structure, interacts with EnvZ.

It is found in the cell inner membrane. In terms of biological role, modulates the activity of the EnvZ/OmpR two-component regulatory system, probably by directly modulating EnvZ enzymatic activity and increasing stability of phosphorylated OmpR. Links the two-component systems CpxA/CpxR and EnvZ/OmpR. The chain is Modulator protein MzrA from Escherichia coli (strain K12).